The chain runs to 367 residues: E3 ubiquitin-protein ligase RGLG3 (367 aa).

The 221-residue stretch at 37-257 (NLILGIDFTK…KEAAFALAAL (221 aa)) folds into the VWFA domain. The RING-type zinc finger occupies 323–356 (CPICLTNPKDMAFSCGHTTCKECGVVITTCPLCR).

In terms of assembly, interacts with UBC30, GRXS17 and GLB3. Binds to and coactivates GAF1/IDD2 and ENY/IDD1. In terms of tissue distribution, widely expressed.

It localises to the cytoplasm. Its subcellular location is the nucleus. It catalyses the reaction S-ubiquitinyl-[E2 ubiquitin-conjugating enzyme]-L-cysteine + [acceptor protein]-L-lysine = [E2 ubiquitin-conjugating enzyme]-L-cysteine + N(6)-ubiquitinyl-[acceptor protein]-L-lysine.. Functionally, possesses E3 ubiquitin-protein ligase in vitro. Acts as upstream modulator of jasmonate (JA) signaling in response to various stimuli, such as JA-inhibited root growth, JA-inductive gene expression, coronatine-mediated pathogen susceptibility, wound-stimulated expression of JA-responsive genes and wound-induced JA biosynthesis. Controls fumonisin B1 (FB1)-triggered programmed cell death (PCD) by modulating the JA signaling pathway. May mediate salicylic acid (SA) suppression of JA signaling in FB1-induced responses. May mediate the formation of 'Lys-48'-linked multiubiquitin chains. Mediates the polyubiquitination and subsequent proteasomal degradation of the target protein GRXS17. This chain is E3 ubiquitin-protein ligase RGLG3, found in Arabidopsis thaliana (Mouse-ear cress).